The primary structure comprises 172 residues: Trypsin inhibitor 1A (172 aa).

2 disulfide bridges follow: cysteine 40-cysteine 84 and cysteine 133-cysteine 139.

Belongs to the protease inhibitor I3 (leguminous Kunitz-type inhibitor) family.

In terms of biological role, WTI-1B inhibits trypsin stoichiometrically. The protein is Trypsin inhibitor 1A of Psophocarpus tetragonolobus (Winged bean).